The chain runs to 254 residues: Acetyl-coenzyme A carboxylase carboxyl transferase subunit beta (254 aa).

Residues 1 to 254 form the CoA carboxyltransferase N-terminal domain; it reads MWLRCPHCHQ…LLKTGSVANE (254 aa). Zn(2+) is bound by residues cysteine 5, cysteine 8, cysteine 23, and cysteine 26. The C4-type zinc-finger motif lies at 5 to 26; sequence CPHCHQLLFAKQLTQYAVCPNC.

The protein belongs to the AccD/PCCB family. As to quaternary structure, acetyl-CoA carboxylase is a heterohexamer composed of biotin carboxyl carrier protein (AccB), biotin carboxylase (AccC) and two subunits each of ACCase subunit alpha (AccA) and ACCase subunit beta (AccD). Zn(2+) serves as cofactor.

It localises to the cytoplasm. It carries out the reaction N(6)-carboxybiotinyl-L-lysyl-[protein] + acetyl-CoA = N(6)-biotinyl-L-lysyl-[protein] + malonyl-CoA. It participates in lipid metabolism; malonyl-CoA biosynthesis; malonyl-CoA from acetyl-CoA: step 1/1. Component of the acetyl coenzyme A carboxylase (ACC) complex. Biotin carboxylase (BC) catalyzes the carboxylation of biotin on its carrier protein (BCCP) and then the CO(2) group is transferred by the transcarboxylase to acetyl-CoA to form malonyl-CoA. The sequence is that of Acetyl-coenzyme A carboxylase carboxyl transferase subunit beta from Limosilactobacillus reuteri (strain DSM 20016) (Lactobacillus reuteri).